The primary structure comprises 1401 residues: Bifunctional 3'-5' exonuclease/ATP-dependent helicase WRN (1401 aa).

The segment at 1 to 271 (METTSLQRKF…FPVTCRNLET (271 aa)) is interaction with WRNIP1. The KBM 1 motif lies at 6–18 (LQRKFPEWMSMQS). Residues 51 to 223 (YEASDCSFLS…GLIIYQKLGN (173 aa)) enclose the 3'-5' exonuclease domain. Zn(2+) is bound by residues aspartate 76 and glutamate 78. Lysine 148 is covalently cross-linked (Glycyl lysine isopeptide (Lys-Gly) (interchain with G-Cter in SUMO2)). Aspartate 210 provides a ligand contact to Zn(2+). Residues lysine 235 and lysine 246 each participate in a glycyl lysine isopeptide (Lys-Gly) (interchain with G-Cter in SUMO2) cross-link. Positions 401 to 427 (QAKEEKYNDVSHQLSEHLSPNDDENDS) are disordered. 3 positions are modified to phosphoserine: serine 419, serine 433, and serine 444. Residues 464–492 (GTNGRLPPEEEDGHGNEAIKEEQEEEDHL) form a disordered region. Positions 522 to 688 (HSVLEERRDN…ISCLNLKDPQ (167 aa)) constitute a Helicase ATP-binding domain. An ATP-binding site is contributed by 535 to 542 (MATGYGKS). Positions 632–635 (DEAH) match the DEAH box motif. One can recognise a Helicase C-terminal domain in the interval 713–866 (DLKPFLVRKA…KLKMMVKMEK (154 aa)). Zn(2+)-binding residues include cysteine 873, cysteine 900, cysteine 901, and cysteine 904. The tract at residues 952-958 (RGSNSQR) is interaction with DNA. The tract at residues 1041-1106 (LLPSSNPVSP…PSPGTSSSPL (66 aa)) is disordered. The segment covering 1043 to 1069 (PSSNPVSPETTQHSSNQNPAGLTTKQS) has biased composition (polar residues). A compositionally biased stretch (basic and acidic residues) spans 1070 to 1081 (NLERTHSYKVPE). Residue serine 1098 is modified to Phosphoserine. Positions 1115–1194 (LDARTGLYAR…KHFCQVTSVQ (80 aa)) constitute an HRDC domain. The segment covering 1323-1332 (GSDSRTQPPC) has biased composition (polar residues). A disordered region spans residues 1323-1401 (GSDSRTQPPC…AKTKKKGLFS (79 aa)). Residues 1348-1358 (ESCKESKEAVT) are compositionally biased toward basic and acidic residues. Residue serine 1364 is modified to Phosphoserine. Positions 1367-1376 (SKRKLPEWFA) match the KBM 2 motif. Residues 1382–1392 (SADTGSSSSMA) are compositionally biased toward polar residues. The XLM motif lies at 1388 to 1401 (SSSMAKTKKKGLFS).

The protein belongs to the helicase family. RecQ subfamily. Monomer, and homooligomer. May exist as homodimer, homotrimer, homotetramer and/or homohexamer. Homotetramer, or homohexamer, when bound to DNA. Interacts via its N-terminal domain with WRNIP1. Interacts with EXO1, PCNA and SUPV3L1. Interacts with PML (isoform PML-4). Interacts (via KBM motif) with XRCC5 and XRCC6; promoting recruitment to DNA damage sites. Interacts with RECQL5; this interaction stimulates WRN helicase activity on DNA fork duplexes. It depends on Zn(2+) as a cofactor. Mn(2+) serves as cofactor. Post-translationally, phosphorylated by PRKDC. Expressed ubiquitously in most organs at a low level, highly expressed in testis, ovary and spleen.

The protein resides in the nucleus. Its subcellular location is the nucleolus. The protein localises to the nucleoplasm. It is found in the chromosome. It catalyses the reaction Couples ATP hydrolysis with the unwinding of duplex DNA by translocating in the 3'-5' direction.. The enzyme catalyses ATP + H2O = ADP + phosphate + H(+). With respect to regulation, zinc ions stimulate the exonuclease activity. Its function is as follows. Multifunctional enzyme that has magnesium and ATP-dependent 3'-5' DNA-helicase activity. Has 3'-&gt;5' exonuclease activity on forked dsDNA. Has no nuclease activity towards single-stranded DNA or blunt-ended double-stranded DNA. Binds preferentially to DNA substrates containing alternate secondary structures, such as replication forks and Holliday junctions. May play an important role in the dissociation of joint DNA molecules that can arise as products of homologous recombination, at stalled replication forks or during DNA repair. Alleviates stalling of DNA polymerases at the site of DNA lesions. Unwinds some G-quadruplex DNA. Plays a role in the formation of DNA replication focal centers; stably associates with foci elements generating binding sites for RP-A. Plays a role in double-strand break repair after gamma-irradiation. In Mus musculus (Mouse), this protein is Bifunctional 3'-5' exonuclease/ATP-dependent helicase WRN (Wrn).